The chain runs to 125 residues: Small ribosomal subunit protein uS13 (125 aa).

The disordered stretch occupies residues 94 to 125 (SLPVRGQRTQTNARTRKGKRKTVAGKKKAVKK). The span at 107 to 125 (RTRKGKRKTVAGKKKAVKK) shows a compositional bias: basic residues.

The protein belongs to the universal ribosomal protein uS13 family. As to quaternary structure, part of the 30S ribosomal subunit. Forms a loose heterodimer with protein S19. Forms two bridges to the 50S subunit in the 70S ribosome.

Located at the top of the head of the 30S subunit, it contacts several helices of the 16S rRNA. In the 70S ribosome it contacts the 23S rRNA (bridge B1a) and protein L5 of the 50S subunit (bridge B1b), connecting the 2 subunits; these bridges are implicated in subunit movement. Contacts the tRNAs in the A and P-sites. In Prosthecochloris aestuarii (strain DSM 271 / SK 413), this protein is Small ribosomal subunit protein uS13.